Here is a 245-residue protein sequence, read N- to C-terminus: Ribonuclease PH (245 aa).

Residues Arg-87 and Gly-125–Arg-127 each bind phosphate.

The protein belongs to the RNase PH family. In terms of assembly, homohexameric ring arranged as a trimer of dimers.

It carries out the reaction tRNA(n+1) + phosphate = tRNA(n) + a ribonucleoside 5'-diphosphate. Its function is as follows. Phosphorolytic 3'-5' exoribonuclease that plays an important role in tRNA 3'-end maturation. Removes nucleotide residues following the 3'-CCA terminus of tRNAs; can also add nucleotides to the ends of RNA molecules by using nucleoside diphosphates as substrates, but this may not be physiologically important. Probably plays a role in initiation of 16S rRNA degradation (leading to ribosome degradation) during starvation. The sequence is that of Ribonuclease PH from Streptomyces griseus subsp. griseus (strain JCM 4626 / CBS 651.72 / NBRC 13350 / KCC S-0626 / ISP 5235).